The chain runs to 204 residues: Holliday junction branch migration complex subunit RuvA (204 aa).

The domain I stretch occupies residues Met1–Gly65. A domain II region spans residues Thr66–Thr142. Residues Ala143 to Ala152 form a flexible linker region. Residues Ala152–Arg204 are domain III.

This sequence belongs to the RuvA family. In terms of assembly, homotetramer. Forms an RuvA(8)-RuvB(12)-Holliday junction (HJ) complex. HJ DNA is sandwiched between 2 RuvA tetramers; dsDNA enters through RuvA and exits via RuvB. An RuvB hexamer assembles on each DNA strand where it exits the tetramer. Each RuvB hexamer is contacted by two RuvA subunits (via domain III) on 2 adjacent RuvB subunits; this complex drives branch migration. In the full resolvosome a probable DNA-RuvA(4)-RuvB(12)-RuvC(2) complex forms which resolves the HJ.

The protein localises to the cytoplasm. In terms of biological role, the RuvA-RuvB-RuvC complex processes Holliday junction (HJ) DNA during genetic recombination and DNA repair, while the RuvA-RuvB complex plays an important role in the rescue of blocked DNA replication forks via replication fork reversal (RFR). RuvA specifically binds to HJ cruciform DNA, conferring on it an open structure. The RuvB hexamer acts as an ATP-dependent pump, pulling dsDNA into and through the RuvAB complex. HJ branch migration allows RuvC to scan DNA until it finds its consensus sequence, where it cleaves and resolves the cruciform DNA. The polypeptide is Holliday junction branch migration complex subunit RuvA (Caulobacter sp. (strain K31)).